The following is a 374-amino-acid chain: Cathepsin W (374 aa).

The first 21 residues, 1 to 21, serve as a signal peptide directing secretion; the sequence is MAITVYLSCLLVLSMAGLAQG. The propeptide occupies 22 to 127; it reads IKSSLRSQDP…EVGSEEWGES (106 aa). 2 disulfides stabilise this stretch: cysteine 150–cysteine 191 and cysteine 184–cysteine 226. Cysteine 153 is an active-site residue. An N-linked (GlcNAc...) asparagine glycan is attached at asparagine 205. Active-site residues include histidine 291 and asparagine 329. Asparagine 347 is a glycosylation site (N-linked (GlcNAc...) asparagine).

It belongs to the peptidase C1 family.

The protein localises to the endoplasmic reticulum. In terms of biological role, may have a specific function in the mechanism or regulation of T-cell cytolytic activity. The sequence is that of Cathepsin W (CTSW) from Felis catus (Cat).